Consider the following 321-residue polypeptide: Beta-ketoacyl-[acyl-carrier-protein] synthase III (321 aa).

Active-site residues include cysteine 114 and histidine 248. Residues glutamine 249 to arginine 253 are ACP-binding. Asparagine 278 is a catalytic residue.

It belongs to the thiolase-like superfamily. FabH family. In terms of assembly, homodimer.

It localises to the cytoplasm. The enzyme catalyses malonyl-[ACP] + acetyl-CoA + H(+) = 3-oxobutanoyl-[ACP] + CO2 + CoA. It functions in the pathway lipid metabolism; fatty acid biosynthesis. In terms of biological role, catalyzes the condensation reaction of fatty acid synthesis by the addition to an acyl acceptor of two carbons from malonyl-ACP. Catalyzes the first condensation reaction which initiates fatty acid synthesis and may therefore play a role in governing the total rate of fatty acid production. Possesses both acetoacetyl-ACP synthase and acetyl transacylase activities. Its substrate specificity determines the biosynthesis of branched-chain and/or straight-chain of fatty acids. This Sphingopyxis alaskensis (strain DSM 13593 / LMG 18877 / RB2256) (Sphingomonas alaskensis) protein is Beta-ketoacyl-[acyl-carrier-protein] synthase III.